Reading from the N-terminus, the 188-residue chain is UPF0157 protein DR_2534 (188 aa).

Residues 1 to 12 (MGRGGRGVGGGR) are compositionally biased toward gly residues. The disordered stretch occupies residues 1–37 (MGRGGRGVGGGRPEGHGASVEGGRTRQTEGMDLISPD).

The protein belongs to the UPF0157 (GrpB) family.

The polypeptide is UPF0157 protein DR_2534 (Deinococcus radiodurans (strain ATCC 13939 / DSM 20539 / JCM 16871 / CCUG 27074 / LMG 4051 / NBRC 15346 / NCIMB 9279 / VKM B-1422 / R1)).